We begin with the raw amino-acid sequence, 578 residues long: Glutamate--tRNA ligase (578 aa).

The 'HIGH' region motif lies at 97–107 (PNPDFVIHLGN).

The protein belongs to the class-I aminoacyl-tRNA synthetase family. Glutamate--tRNA ligase type 2 subfamily.

The protein resides in the cytoplasm. It carries out the reaction tRNA(Glu) + L-glutamate + ATP = L-glutamyl-tRNA(Glu) + AMP + diphosphate. Functionally, catalyzes the attachment of glutamate to tRNA(Glu) in a two-step reaction: glutamate is first activated by ATP to form Glu-AMP and then transferred to the acceptor end of tRNA(Glu). The protein is Glutamate--tRNA ligase of Hyperthermus butylicus (strain DSM 5456 / JCM 9403 / PLM1-5).